Consider the following 258-residue polypeptide: UPF0246 protein PM0066 (258 aa).

Belongs to the UPF0246 family.

This Pasteurella multocida (strain Pm70) protein is UPF0246 protein PM0066.